The chain runs to 166 residues: NAD(P)H-quinone oxidoreductase subunit I, chloroplastic (166 aa).

4Fe-4S ferredoxin-type domains lie at 55–84 and 95–124; these read GRIH…VDWK and LNYS…MTEE. Cysteine 64, cysteine 67, cysteine 70, cysteine 74, cysteine 104, cysteine 107, cysteine 110, and cysteine 114 together coordinate [4Fe-4S] cluster.

Belongs to the complex I 23 kDa subunit family. In terms of assembly, NDH is composed of at least 16 different subunits, 5 of which are encoded in the nucleus. It depends on [4Fe-4S] cluster as a cofactor.

It is found in the plastid. Its subcellular location is the chloroplast thylakoid membrane. The enzyme catalyses a plastoquinone + NADH + (n+1) H(+)(in) = a plastoquinol + NAD(+) + n H(+)(out). The catalysed reaction is a plastoquinone + NADPH + (n+1) H(+)(in) = a plastoquinol + NADP(+) + n H(+)(out). NDH shuttles electrons from NAD(P)H:plastoquinone, via FMN and iron-sulfur (Fe-S) centers, to quinones in the photosynthetic chain and possibly in a chloroplast respiratory chain. The immediate electron acceptor for the enzyme in this species is believed to be plastoquinone. Couples the redox reaction to proton translocation, and thus conserves the redox energy in a proton gradient. This Picradeniopsis absinthifolia (Hairyseed bahia) protein is NAD(P)H-quinone oxidoreductase subunit I, chloroplastic.